The primary structure comprises 199 residues: Elongation factor Ts (199 aa).

Positions Thr82–Val85 are involved in Mg(2+) ion dislocation from EF-Tu.

This sequence belongs to the EF-Ts family.

The protein resides in the cytoplasm. Associates with the EF-Tu.GDP complex and induces the exchange of GDP to GTP. It remains bound to the aminoacyl-tRNA.EF-Tu.GTP complex up to the GTP hydrolysis stage on the ribosome. The protein is Elongation factor Ts of Leptospira borgpetersenii serovar Hardjo-bovis (strain JB197).